A 159-amino-acid polypeptide reads, in one-letter code: Ribosomal RNA large subunit methyltransferase H (159 aa).

Gly108 contributes to the S-adenosyl-L-methionine binding site.

This sequence belongs to the RNA methyltransferase RlmH family. Homodimer.

It localises to the cytoplasm. The catalysed reaction is pseudouridine(1915) in 23S rRNA + S-adenosyl-L-methionine = N(3)-methylpseudouridine(1915) in 23S rRNA + S-adenosyl-L-homocysteine + H(+). Its function is as follows. Specifically methylates the pseudouridine at position 1915 (m3Psi1915) in 23S rRNA. The protein is Ribosomal RNA large subunit methyltransferase H of Lactobacillus johnsonii (strain CNCM I-12250 / La1 / NCC 533).